We begin with the raw amino-acid sequence, 377 residues long: Guanine nucleotide-binding protein subunit beta-2 (377 aa).

WD repeat units lie at residues 63 to 93 (GHTGKVYSLDWTPEKNRIVSASQDGRLIVWN), 105 to 135 (LPCAWVMTCAFSPSGQSVACGGLDSVCSIFN), 154 to 185 (GHKGYVSSCQYVPDEDTHVITSSGDQTCVLWD), 202 to 233 (GHTADVQSVSISSSNPRLFVSGSCDSTARLWD), 246 to 276 (GHEGDVNTVKFFPDGNRFGTGSDDGTCRLFD), 293 to 323 (GDIPHVTSMAFSISGRLLFVGYSNGDCYVWD), and 339 to 369 (SHEGRISCLGLSADGSALCTGSWDTNLKIWA).

Belongs to the WD repeat G protein beta family. G proteins are composed of 3 units, alpha, beta and gamma.

Functionally, guanine nucleotide-binding proteins (G proteins) are involved as a modulator or transducer in various transmembrane signaling systems. The beta and gamma chains are required for the GTPase activity, for replacement of GDP by GTP, and for G protein-effector interaction. In Nicotiana tabacum (Common tobacco), this protein is Guanine nucleotide-binding protein subunit beta-2.